The chain runs to 281 residues: ATP phosphoribosyltransferase (281 aa).

Belongs to the ATP phosphoribosyltransferase family. Long subfamily. Equilibrium between an active dimeric form, an inactive hexameric form and higher aggregates. Interconversion between the various forms is largely reversible and is influenced by the natural substrates and inhibitors of the enzyme. Requires Mg(2+) as cofactor.

It is found in the cytoplasm. It carries out the reaction 1-(5-phospho-beta-D-ribosyl)-ATP + diphosphate = 5-phospho-alpha-D-ribose 1-diphosphate + ATP. Its pathway is amino-acid biosynthesis; L-histidine biosynthesis; L-histidine from 5-phospho-alpha-D-ribose 1-diphosphate: step 1/9. Feedback inhibited by histidine. In terms of biological role, catalyzes the condensation of ATP and 5-phosphoribose 1-diphosphate to form N'-(5'-phosphoribosyl)-ATP (PR-ATP). Has a crucial role in the pathway because the rate of histidine biosynthesis seems to be controlled primarily by regulation of HisG enzymatic activity. The polypeptide is ATP phosphoribosyltransferase (Mycolicibacterium gilvum (strain PYR-GCK) (Mycobacterium gilvum (strain PYR-GCK))).